The primary structure comprises 142 residues: ATP synthase epsilon chain (142 aa).

The protein belongs to the ATPase epsilon chain family. As to quaternary structure, F-type ATPases have 2 components, CF(1) - the catalytic core - and CF(0) - the membrane proton channel. CF(1) has five subunits: alpha(3), beta(3), gamma(1), delta(1), epsilon(1). CF(0) has three main subunits: a, b and c.

It is found in the cell inner membrane. Produces ATP from ADP in the presence of a proton gradient across the membrane. This chain is ATP synthase epsilon chain, found in Shewanella putrefaciens (strain CN-32 / ATCC BAA-453).